A 513-amino-acid polypeptide reads, in one-letter code: Dye-decolorizing peroxidase msp1 (513 aa).

The N-terminal stretch at methionine 1–alanine 20 is a signal peptide. The propeptide occupies threonine 21–serine 55. The disordered stretch occupies residues arginine 33–glutamine 52. The Proton acceptor role is filled by aspartate 228. Residue histidine 365 participates in heme binding.

As to quaternary structure, homodimer. Heme b is required as a cofactor.

Its subcellular location is the secreted. The enzyme catalyses Reactive Blue 5 + 2 H2O2 = 2,2'-disulfonyl azobenzene + 3-[(4-amino-6-chloro-1,3,5-triazin-2-yl)amino]benzenesulfonate + phthalate + 2 H2O + 2 H(+). The catalysed reaction is 2 a phenolic donor + H2O2 = 2 a phenolic radical donor + 2 H2O. Its function is as follows. Manganese-independent peroxidase that is able to convert a large number of compounds, but its physiological substrate is not known. In addition to classic peroxidase substrates (e.g. 2,6-dimethoxyphenol), oxidizes dyes such as Reactive Blue 5. Also degrades beta-carotene. This Mycetinis scorodonius (Garlic mushroom) protein is Dye-decolorizing peroxidase msp1.